Consider the following 1059-residue polypeptide: Microtubule-associated protein 1S (1059 aa).

A necessary for the microtubule-organizing center localization region spans residues 1–797 (MAAVAGSGAA…SESLPTLSDS (797 aa)). Phosphoserine occurs at positions 321 and 472. Disordered regions lie at residues 461–733 (PQDL…ASPH) and 751–942 (VPMA…SATP). Composition is skewed to basic and acidic residues over residues 466–486 (GPGR…KREG) and 494–530 (PGQE…KDPK). Over residues 547-557 (SVPNLKKTNAQ) the composition is skewed to polar residues. Phosphoserine is present on Ser582. Residues 591-603 (ASPPSAACGSPAS) are compositionally biased toward low complexity. Thr638 is subject to Phosphothreonine. Residue Ser640 is modified to Phosphoserine. Residues 642-652 (ESHRSPAEGSE) are compositionally biased toward basic and acidic residues. Ser655 and Ser657 each carry phosphoserine. The interval 666-1059 (PDASPTVTTP…DAFPACKVEF (394 aa)) is necessary for interaction with RASSF1 isoform A and isoform C. The span at 670–680 (PTVTTPTVTTP) shows a compositional bias: low complexity. The segment at 714–966 (EAGLSLPLRG…GSSAHLVDEE (253 aa)) is necessary for association with microtubules. 2 positions are modified to phosphoserine: Ser731 and Ser759. Positions 759–769 (SPGSSNDSSAR) are enriched in low complexity. Positions 783–796 (PPTSVSESLPTLSD) are enriched in polar residues. Ser809 bears the Phosphoserine mark. The span at 825–836 (PDPLKVPPPLPD) shows a compositional bias: pro residues. Low complexity-rich tracts occupy residues 873–887 (AAAP…AKTK) and 923–936 (TATR…SSRP). The necessary for association with actin stretch occupies residues 960 to 1059 (AHLVDEEFFQ…DAFPACKVEF (100 aa)). The necessary for the mitochondrial aggregation and genome destruction stretch occupies residues 967 to 991 (FFQRVRALCYVISGQDQRKEEGMRA).

The protein belongs to the MAP1 family. As to quaternary structure, heterodimer of a heavy and a light chain. Interacts with microtubules and actin. Both MAP1S heavy and light chains interact with microtubules. MAP1S light chain interacts with actin. Interacts (via C-terminus) with GAN (via Kelch domains). Interacts with ESR1, LRPPRC, RASSF1 isoform A and isoform C, microtubules and VCY2. Interacts with WDR47 (via N-terminus of light chain). In terms of tissue distribution, expressed in neurons (at protein level). Expressed in spermatocytes, spermatids and spermatozoa. Expressed in the cerebral cortex. Highly expressed in testis. Moderately expressed in the brain, colon, heart, kidney, liver, lung, placenta, small intestine, spleen and stomach. Weakly expressed in muscle.

Its subcellular location is the nucleus. The protein resides in the cytoplasm. It localises to the cytosol. The protein localises to the cytoskeleton. It is found in the spindle. In terms of biological role, microtubule-associated protein that mediates aggregation of mitochondria resulting in cell death and genomic destruction (MAGD). Plays a role in anchoring the microtubule organizing center to the centrosomes. Binds to DNA. Plays a role in apoptosis. Involved in the formation of microtubule bundles. The protein is Microtubule-associated protein 1S (MAP1S) of Homo sapiens (Human).